The sequence spans 637 residues: Chaperone protein HtpG (637 aa).

Residues 1–345 form an a; substrate-binding region; the sequence is MSQQETHGFQ…SNDLPLNVSR (345 aa). The b stretch occupies residues 346-562; that stretch reads EILQDNHVTK…EGEMSTQMIK (217 aa). The c stretch occupies residues 563 to 637; that stretch reads LMQAAGQPVP…MNQMLLANMK (75 aa).

Belongs to the heat shock protein 90 family. Homodimer.

It localises to the cytoplasm. In terms of biological role, molecular chaperone. Has ATPase activity. This is Chaperone protein HtpG from Shewanella baltica (strain OS185).